We begin with the raw amino-acid sequence, 323 residues long: tRNA dimethylallyltransferase (323 aa).

27 to 34 contacts ATP; it reads GPTGSGKT. Substrate is bound at residue 29–34; the sequence is TGSGKT. Interaction with substrate tRNA regions lie at residues 52 to 55 and 176 to 180; these read DSRQ and QRIVR.

The protein belongs to the IPP transferase family. As to quaternary structure, monomer. Requires Mg(2+) as cofactor.

It catalyses the reaction adenosine(37) in tRNA + dimethylallyl diphosphate = N(6)-dimethylallyladenosine(37) in tRNA + diphosphate. Functionally, catalyzes the transfer of a dimethylallyl group onto the adenine at position 37 in tRNAs that read codons beginning with uridine, leading to the formation of N6-(dimethylallyl)adenosine (i(6)A). The chain is tRNA dimethylallyltransferase from Desulfovibrio desulfuricans (strain ATCC 27774 / DSM 6949 / MB).